Here is a 363-residue protein sequence, read N- to C-terminus: NAD(P)H-quinone oxidoreductase subunit 1, chloroplastic (363 aa).

8 helical membrane passes run 30–50 (LFPI…IVWL), 98–118 (FSIG…VIPF), 127–147 (LSIG…GLLM), 165–185 (AAQS…ISLL), 203–223 (FWGW…ISSL), 248–268 (YSGI…LVSS), 300–320 (VFGT…FLFI), and 336–356 (LLNL…LLTT).

Belongs to the complex I subunit 1 family. As to quaternary structure, NDH is composed of at least 16 different subunits, 5 of which are encoded in the nucleus.

It is found in the plastid. The protein localises to the chloroplast thylakoid membrane. The enzyme catalyses a plastoquinone + NADH + (n+1) H(+)(in) = a plastoquinol + NAD(+) + n H(+)(out). The catalysed reaction is a plastoquinone + NADPH + (n+1) H(+)(in) = a plastoquinol + NADP(+) + n H(+)(out). In terms of biological role, NDH shuttles electrons from NAD(P)H:plastoquinone, via FMN and iron-sulfur (Fe-S) centers, to quinones in the photosynthetic chain and possibly in a chloroplast respiratory chain. The immediate electron acceptor for the enzyme in this species is believed to be plastoquinone. Couples the redox reaction to proton translocation, and thus conserves the redox energy in a proton gradient. The protein is NAD(P)H-quinone oxidoreductase subunit 1, chloroplastic of Nicotiana tomentosiformis (Tobacco).